The primary structure comprises 445 residues: Xylose isomerase (445 aa).

Catalysis depends on residues H109 and D112. Mg(2+)-binding residues include E240, E276, H279, D304, D315, D317, and D347.

Belongs to the xylose isomerase family. As to quaternary structure, homotetramer. Mg(2+) is required as a cofactor.

Its subcellular location is the cytoplasm. The catalysed reaction is alpha-D-xylose = alpha-D-xylulofuranose. The sequence is that of Xylose isomerase from Xanthomonas oryzae pv. oryzae (strain MAFF 311018).